The primary structure comprises 423 residues: Limonoid 21-O-acetyltransferse (423 aa).

Active-site proton acceptor residues include His-152 and Asp-362.

The protein belongs to the plant acyltransferase family. In terms of assembly, monomer. As to expression, mainly expressed in petioles.

It catalyses the reaction isomeliandiol + acetyl-CoA = 21-O-acetyl-isomeliandiol + CoA. It functions in the pathway secondary metabolite biosynthesis; terpenoid biosynthesis. In terms of biological role, acetyltransferase involved in the biosynthesis of limonoids triterpene natural products such as azadirachtin, an antifeedant widely used as bioinsecticide, and possessing many medicinal applications including anti-tumoral, anti-malarial, anti-rheumatic, antibacterial, anti-inflammatory, anti-pyretic and diuretic effects. Catalyzes the formation of 21-O-acetyl-isomeliandiol from isomeliandiol. The sequence is that of Limonoid 21-O-acetyltransferse from Melia azedarach (Chinaberry tree).